The chain runs to 44 residues: Homeobox protein DLX-1 (44 aa).

Positions 19–44 (RALSAGSPPVPPGWNRIPPLGRAQEE) are disordered.

The protein belongs to the distal-less homeobox family. In terms of assembly, interacts with SMAD4 (via homeobox DNA-binding domain). Interacts (via homeobox DNA-binding domain) with POU4F2; this interaction suppresses DLX1-mediated transcriptional activity in postnatal retina and enhances retinal ganglion cell (RGC) differentiation.

It is found in the nucleus. In terms of biological role, plays a role as a transcriptional activator or repressor. Inhibits several cytokine signaling pathways, such as TGFB1, activin-A/INHBA and BMP4 by interfering with the transcriptional stimulatory activity of transcription factors, such as MSX2, FAST2, SMAD2 and SMAD3 during hematopoietic cell differentiation. Plays a role in terminal differentiation of interneurons, such as amacrine and bipolar cells in the developing retina. Likely to play a regulatory role in the development of the ventral forebrain. May play a role in craniofacial patterning and morphogenesis and may be involved in the early development of diencephalic subdivisions. The polypeptide is Homeobox protein DLX-1 (Dlx1) (Rattus norvegicus (Rat)).